A 146-amino-acid polypeptide reads, in one-letter code: Vascular endothelial growth factor isoform GtVF (146 aa).

The signal sequence occupies residues M1–G24. Residue Q25 is modified to Pyrrolidone carboxylic acid. Cystine bridges form between C38–C80, C69–C115, and C73–C117. The disordered stretch occupies residues E116–V146. Residues N133–V146 are compositionally biased toward basic and acidic residues.

Belongs to the PDGF/VEGF growth factor family. Snake venom VEGF subfamily. In terms of assembly, homodimer; disulfide-linked. Expressed by the venom gland.

The protein localises to the secreted. Snake venom VEGFs that may contribute to venom dispersion and prey subjugation by inducing vascular permeability and hypotension. This protein induces an increase in capillary permeability after intradermal injection, in a VEGFR-2 (KDR) dependent manner. In addition, it provokes a drastic hypotensive effect after intravenous injection. The hypotension is mediated by nitric oxide (NO), which is produced by VEGF-activated endothelium NO synthase. Also induces angiogenesis in vitro. Unlike other crotalid VEGFs, this protein probably interacts with VEGF receptor-2 (KDR). This chain is Vascular endothelial growth factor isoform GtVF, found in Gloydius tsushimaensis (Tsushima Island pitviper).